A 131-amino-acid polypeptide reads, in one-letter code: Profilin-2 (131 aa).

Belongs to the profilin family. Occurs in many kinds of cells as a complex with monomeric actin in a 1:1 ratio.

Its subcellular location is the cytoplasm. The protein localises to the cytoskeleton. Functionally, binds to actin and affects the structure of the cytoskeleton. At high concentrations, profilin prevents the polymerization of actin, whereas it enhances it at low concentrations. By binding to PIP2, it inhibits the formation of IP3 and DG. The chain is Profilin-2 from Ambrosia artemisiifolia (Common ragweed).